The sequence spans 385 residues: Succinyl-diaminopimelate desuccinylase (385 aa).

Position 73 (His73) interacts with Zn(2+). Residue Asp75 is part of the active site. Asp106 lines the Zn(2+) pocket. Residue Glu141 is the Proton acceptor of the active site. Positions 142, 170, and 359 each coordinate Zn(2+).

The protein belongs to the peptidase M20A family. DapE subfamily. Homodimer. Zn(2+) is required as a cofactor. The cofactor is Co(2+).

The catalysed reaction is N-succinyl-(2S,6S)-2,6-diaminopimelate + H2O = (2S,6S)-2,6-diaminopimelate + succinate. It functions in the pathway amino-acid biosynthesis; L-lysine biosynthesis via DAP pathway; LL-2,6-diaminopimelate from (S)-tetrahydrodipicolinate (succinylase route): step 3/3. Its function is as follows. Catalyzes the hydrolysis of N-succinyl-L,L-diaminopimelic acid (SDAP), forming succinate and LL-2,6-diaminopimelate (DAP), an intermediate involved in the bacterial biosynthesis of lysine and meso-diaminopimelic acid, an essential component of bacterial cell walls. The sequence is that of Succinyl-diaminopimelate desuccinylase from Methylorubrum extorquens (strain PA1) (Methylobacterium extorquens).